The chain runs to 145 residues: Large ribosomal subunit protein uL11 (145 aa).

Belongs to the universal ribosomal protein uL11 family. Part of the ribosomal stalk of the 50S ribosomal subunit. Interacts with L10 and the large rRNA to form the base of the stalk. L10 forms an elongated spine to which L12 dimers bind in a sequential fashion forming a multimeric L10(L12)X complex. Post-translationally, one or more lysine residues are methylated.

Its function is as follows. Forms part of the ribosomal stalk which helps the ribosome interact with GTP-bound translation factors. This Coxiella burnetii (strain CbuK_Q154) (Coxiella burnetii (strain Q154)) protein is Large ribosomal subunit protein uL11.